The sequence spans 334 residues: Holliday junction branch migration complex subunit RuvB (334 aa).

A large ATPase domain (RuvB-L) region spans residues 1–182 (MDDRMIDGEL…FGVLSRLEYY (182 aa)). Residues Leu-21, Arg-22, Gly-63, Lys-66, Thr-67, Thr-68, 129 to 131 (EDF), Arg-172, Tyr-182, and Arg-219 contribute to the ATP site. A Mg(2+)-binding site is contributed by Thr-67. Positions 183–253 (EIKDLCNIVE…STKQALEMLQ (71 aa)) are small ATPAse domain (RuvB-S). Residues 256 to 334 (DAGLDHVDHK…HLGIKRTGED (79 aa)) form a head domain (RuvB-H) region. Positions 311 and 316 each coordinate DNA.

This sequence belongs to the RuvB family. Homohexamer. Forms an RuvA(8)-RuvB(12)-Holliday junction (HJ) complex. HJ DNA is sandwiched between 2 RuvA tetramers; dsDNA enters through RuvA and exits via RuvB. An RuvB hexamer assembles on each DNA strand where it exits the tetramer. Each RuvB hexamer is contacted by two RuvA subunits (via domain III) on 2 adjacent RuvB subunits; this complex drives branch migration. In the full resolvosome a probable DNA-RuvA(4)-RuvB(12)-RuvC(2) complex forms which resolves the HJ.

The protein localises to the cytoplasm. The catalysed reaction is ATP + H2O = ADP + phosphate + H(+). In terms of biological role, the RuvA-RuvB-RuvC complex processes Holliday junction (HJ) DNA during genetic recombination and DNA repair, while the RuvA-RuvB complex plays an important role in the rescue of blocked DNA replication forks via replication fork reversal (RFR). RuvA specifically binds to HJ cruciform DNA, conferring on it an open structure. The RuvB hexamer acts as an ATP-dependent pump, pulling dsDNA into and through the RuvAB complex. RuvB forms 2 homohexamers on either side of HJ DNA bound by 1 or 2 RuvA tetramers; 4 subunits per hexamer contact DNA at a time. Coordinated motions by a converter formed by DNA-disengaged RuvB subunits stimulates ATP hydrolysis and nucleotide exchange. Immobilization of the converter enables RuvB to convert the ATP-contained energy into a lever motion, pulling 2 nucleotides of DNA out of the RuvA tetramer per ATP hydrolyzed, thus driving DNA branch migration. The RuvB motors rotate together with the DNA substrate, which together with the progressing nucleotide cycle form the mechanistic basis for DNA recombination by continuous HJ branch migration. Branch migration allows RuvC to scan DNA until it finds its consensus sequence, where it cleaves and resolves cruciform DNA. This Oceanobacillus iheyensis (strain DSM 14371 / CIP 107618 / JCM 11309 / KCTC 3954 / HTE831) protein is Holliday junction branch migration complex subunit RuvB.